The chain runs to 542 residues: Membrane protein insertase YidC (542 aa).

6 helical membrane-spanning segments follow: residues 6 to 26, 326 to 346, 350 to 370, 421 to 441, 458 to 478, and 501 to 521; these read NILLIGLLFVSFLMWQQWQTD, LVVDYGFLWWLAIPIHWLLMF, FVGNWGVAIILITLTVRGGLY, GGCLPILLQMPIFIALYWVLL, LSVQDPYYVLPLLMGLSMFLM, and VIFTVFFLWFPAGLVLYWLVG.

It belongs to the OXA1/ALB3/YidC family. Type 1 subfamily. As to quaternary structure, interacts with the Sec translocase complex via SecD. Specifically interacts with transmembrane segments of nascent integral membrane proteins during membrane integration.

It localises to the cell inner membrane. Its function is as follows. Required for the insertion and/or proper folding and/or complex formation of integral membrane proteins into the membrane. Involved in integration of membrane proteins that insert both dependently and independently of the Sec translocase complex, as well as at least some lipoproteins. Aids folding of multispanning membrane proteins. The polypeptide is Membrane protein insertase YidC (Shewanella frigidimarina (strain NCIMB 400)).